The primary structure comprises 943 residues: Nuclear factor of activated T-cells, cytoplasmic 1 (943 aa).

Residues glycine 22–alanine 48 form a disordered region. A calcineurin-binding region spans residues proline 118 to threonine 123. Residues leucine 126–glutamate 218 are transactivation domain A (TAD-A). The disordered stretch occupies residues proline 200–aspartate 298. Residues glutamine 201 to threonine 214 show a composition bias toward polar residues. 2 consecutive repeat copies span residues serine 203–glutamate 219 and serine 233–glutamate 249. A 3 X SP repeats region spans residues serine 203–aspartate 298. Phosphoserine is present on residues serine 233 and serine 237. Residues histidine 236 to glutamate 248 show a composition bias toward polar residues. A Phosphoserine; by PKA modification is found at serine 245. Residues lysine 265 to lysine 267 carry the Nuclear localization signal motif. Serine 269 is subject to Phosphoserine; by PKA. The segment covering proline 276–histidine 288 has biased composition (pro residues). Repeat 3 spans residues serine 282–aspartate 298. Residue serine 294 is modified to Phosphoserine; by PKA. The Nuclear export signal signature appears at serine 310–threonine 321. An RHD domain is found at proline 410 to alanine 592. A DNA-binding region spans residues arginine 439 to glycine 446. The short motif at lysine 682–lysine 684 is the Nuclear localization signal element. The segment at threonine 703–serine 943 is transactivation domain B (TAD-B). Residues histidine 787–threonine 912 form a disordered region. The span at serine 846 to threonine 855 shows a compositional bias: pro residues. Positions tyrosine 924 to arginine 933 match the Nuclear export signal motif.

In terms of assembly, member of the multicomponent NFATC transcription complex that consists of at least two components, a pre-existing cytoplasmic component NFATC2 and an inducible nuclear component NFATC1. Other members such as NFATC4, NFATC3 or members of the activating protein-1 family, MAF, GATA4 and Cbp/p300 can also bind the complex. NFATC proteins bind to DNA as monomers. Interacts with HOMER2 and HOMER3; this interaction may compete with calcineurin/PPP3CA-binding and hence prevent NFATC1 dephosphorylation and activation. Interacts with TLE6/GRG6. In terms of processing, phosphorylated by NFATC-kinase and GSK3B; phosphorylation induces NFATC1 nuclear exit and dephosphorylation by calcineurin promotes nuclear import. Phosphorylation by PKA and DYRK2 negatively modulates nuclear accumulation, and promotes subsequent phosphorylation by GSK3B or casein kinase 1. As to expression, expressed in thymus, peripheral leukocytes as T-cells and spleen. Isoforms A are preferentially expressed in effector T-cells (thymus and peripheral leukocytes) whereas isoforms B and isoforms C are preferentially expressed in naive T-cells (spleen). Isoforms B are expressed in naive T-cells after first antigen exposure and isoforms A are expressed in effector T-cells after second antigen exposure. Isoforms IA are widely expressed but not detected in liver nor pancreas, neural expression is strongest in corpus callosum. Isoforms IB are expressed mostly in muscle, cerebellum, placenta and thymus, neural expression in fetal and adult brain, strongest in corpus callosum.

The protein localises to the cytoplasm. Its subcellular location is the nucleus. Plays a role in the inducible expression of cytokine genes in T-cells, especially in the induction of the IL-2 or IL-4 gene transcription. Also controls gene expression in embryonic cardiac cells. Could regulate not only the activation and proliferation but also the differentiation and programmed death of T-lymphocytes as well as lymphoid and non-lymphoid cells. Required for osteoclastogenesis and regulates many genes important for osteoclast differentiation and function. The protein is Nuclear factor of activated T-cells, cytoplasmic 1 (NFATC1) of Homo sapiens (Human).